A 425-amino-acid polypeptide reads, in one-letter code: tRNA(Met) cytidine acetate ligase (425 aa).

ATP contacts are provided by residues 7 to 20 (VVEY…HLHH), Gly-102, Asn-162, and 187 to 188 (RI).

Belongs to the TmcAL family.

Its subcellular location is the cytoplasm. It catalyses the reaction cytidine(34) in elongator tRNA(Met) + acetate + ATP = N(4)-acetylcytidine(34) in elongator tRNA(Met) + AMP + diphosphate. Catalyzes the formation of N(4)-acetylcytidine (ac(4)C) at the wobble position of elongator tRNA(Met), using acetate and ATP as substrates. First activates an acetate ion to form acetyladenylate (Ac-AMP) and then transfers the acetyl group to tRNA to form ac(4)C34. This chain is tRNA(Met) cytidine acetate ligase, found in Fervidobacterium nodosum (strain ATCC 35602 / DSM 5306 / Rt17-B1).